An 847-amino-acid chain; its full sequence is Collagen alpha-1(I) chain (847 aa).

The disordered stretch occupies residues 1–847 (GPMGPSGPRG…PGPIGPPGPR (847 aa)). Low complexity predominate over residues 20–39 (PQGFQGPPGEPGEPGSSGPM). The segment covering 51–65 (NGDDGEAGKPGRPGE) has biased composition (basic and acidic residues). Ser-85 carries the phosphoserine modification. 2 stretches are compositionally biased toward low complexity: residues 93–109 (DAGPAGPKGEPGSPGEN) and 127–145 (PGASGPAGARGNDGATGAA). Residues 147–159 (PPGPTGPAGPPGF) are compositionally biased toward pro residues. 7 stretches are compositionally biased toward low complexity: residues 193–208 (AGAAGPAGNPGADGQP), 219–228 (QGPSGAPGPK), 298–314 (PKGITGSPGSPGPDGKT), 334–343 (PGPKGAAGEP), 500–543 (PSGP…KGDA), 551–599 (PTGA…NAGA), and 628–638 (SPGADGPAGAP). Ser-501 carries the post-translational modification Phosphoserine. Over residues 685–695 (PPGPMGPPGIA) the composition is skewed to pro residues. Positions 697–712 (PPGESGREGSPGAEGS) are enriched in low complexity. The segment covering 731–746 (SGPPGAPGAPGAPGPV) has biased composition (pro residues). Low complexity predominate over residues 763 to 777 (AGPAGARGPSGPQGP). The segment covering 778–789 (RGDKGETGEQGD) has biased composition (basic and acidic residues). The span at 793–838 (SGIQGPPGAPGSPGEQGPSGASGPAGPRGPPGSAGSPGKDGINGIP) shows a compositional bias: low complexity.

This sequence belongs to the fibrillar collagen family. As to quaternary structure, trimers of one alpha 2(I) and two alpha 1(I) chains. In terms of processing, prolines at the third position of the tripeptide repeating unit (G-X-Y) are hydroxylated in some or all of the chains. Forms the fibrils of tendon, ligaments and bones. In bones, the fibrils are mineralized with calcium hydroxyapatite.

The protein resides in the secreted. It is found in the extracellular space. The protein localises to the extracellular matrix. Type I collagen is a member of group I collagen (fibrillar forming collagen). The protein is Collagen alpha-1(I) chain of Cyclopes didactylus (Silky anteater).